A 140-amino-acid chain; its full sequence is ATP synthase epsilon chain (140 aa).

Belongs to the ATPase epsilon chain family. As to quaternary structure, F-type ATPases have 2 components, CF(1) - the catalytic core - and CF(0) - the membrane proton channel. CF(1) has five subunits: alpha(3), beta(3), gamma(1), delta(1), epsilon(1). CF(0) has three main subunits: a, b and c.

Its subcellular location is the cell inner membrane. Its function is as follows. Produces ATP from ADP in the presence of a proton gradient across the membrane. This is ATP synthase epsilon chain from Xanthomonas oryzae pv. oryzae (strain MAFF 311018).